Here is a 607-residue protein sequence, read N- to C-terminus: Elongation factor 4 (607 aa).

The 183-residue stretch at 11 to 193 folds into the tr-type G domain; the sequence is EKIRNFSIIA…QIVEKVPAPT (183 aa). GTP-binding positions include 23 to 28 and 140 to 143; these read DHGKST and NKID.

This sequence belongs to the TRAFAC class translation factor GTPase superfamily. Classic translation factor GTPase family. LepA subfamily.

The protein resides in the cell membrane. The enzyme catalyses GTP + H2O = GDP + phosphate + H(+). Required for accurate and efficient protein synthesis under certain stress conditions. May act as a fidelity factor of the translation reaction, by catalyzing a one-codon backward translocation of tRNAs on improperly translocated ribosomes. Back-translocation proceeds from a post-translocation (POST) complex to a pre-translocation (PRE) complex, thus giving elongation factor G a second chance to translocate the tRNAs correctly. Binds to ribosomes in a GTP-dependent manner. The polypeptide is Elongation factor 4 (Streptococcus pneumoniae serotype 19F (strain G54)).